A 174-amino-acid polypeptide reads, in one-letter code: Cytidylate kinase (174 aa).

7–15 (GLPGTGTTT) contributes to the ATP binding site.

It belongs to the cytidylate kinase family. Type 2 subfamily.

It localises to the cytoplasm. It catalyses the reaction CMP + ATP = CDP + ADP. It carries out the reaction dCMP + ATP = dCDP + ADP. This Methanococcus vannielii (strain ATCC 35089 / DSM 1224 / JCM 13029 / OCM 148 / SB) protein is Cytidylate kinase.